Reading from the N-terminus, the 29-residue chain is Prolamin alpha-1 (29 aa).

This Dactylis glomerata (Orchard grass) protein is Prolamin alpha-1.